A 123-amino-acid polypeptide reads, in one-letter code: Maintenance of telomere capping protein 3, mitochondrial (123 aa).

Residues 1–37 (MMGRNGIRLALKRSFSTYQPPVVEITNITKLWPTLRP) constitute a mitochondrion transit peptide.

The protein resides in the mitochondrion. In terms of biological role, may be involved in telomere capping. This chain is Maintenance of telomere capping protein 3, mitochondrial (MTC3), found in Saccharomyces cerevisiae (strain ATCC 204508 / S288c) (Baker's yeast).